The primary structure comprises 225 residues: Probable methylthioribulose-1-phosphate dehydratase (225 aa).

Residue Cys86 participates in substrate binding. Zn(2+) contacts are provided by His104 and His106. Catalysis depends on Glu127, which acts as the Proton donor/acceptor. His183 is a binding site for Zn(2+).

The protein belongs to the aldolase class II family. MtnB subfamily. The cofactor is Zn(2+).

Its subcellular location is the cytoplasm. It carries out the reaction 5-(methylsulfanyl)-D-ribulose 1-phosphate = 5-methylsulfanyl-2,3-dioxopentyl phosphate + H2O. Its pathway is amino-acid biosynthesis; L-methionine biosynthesis via salvage pathway; L-methionine from S-methyl-5-thio-alpha-D-ribose 1-phosphate: step 2/6. Its function is as follows. Catalyzes the dehydration of methylthioribulose-1-phosphate (MTRu-1-P) into 2,3-diketo-5-methylthiopentyl-1-phosphate (DK-MTP-1-P). In Leishmania braziliensis, this protein is Probable methylthioribulose-1-phosphate dehydratase.